We begin with the raw amino-acid sequence, 475 residues long: Ankyrin repeat, SAM and basic leucine zipper domain-containing protein 1 (475 aa).

The interval 1–24 (MAAGTVRGLAVAGGGESSESEDDG) is disordered. 3 positions are modified to phosphoserine: S17, S18, and S20. ANK repeat units lie at residues 45-74 (EKNE…SVDS), 78-107 (YGWT…NASF), 110-144 (DKQT…DPNV), 148-177 (RLMT…EVNA), 181-210 (NGYT…NKML), and 214-243 (DGKT…PLEG). Residues 272 to 334 (SYTAFGDLEI…KILAALKELE (63 aa)) form the SAM domain.

Interacts with DDX4, PIWIL1, RANBP9 and TDRD1.

It is found in the cytoplasm. In terms of biological role, plays a central role during spermatogenesis by repressing transposable elements and preventing their mobilization, which is essential for the germline integrity. Acts via the piRNA metabolic process, which mediates the repression of transposable elements during meiosis by forming complexes composed of piRNAs and Piwi proteins and governs the methylation and subsequent repression of transposons. Its association with pi-bodies suggests a participation in the primary piRNAs metabolic process. Required prior to the pachytene stage to facilitate the production of multiple types of piRNAs, including those associated with repeats involved in the regulation of retrotransposons. May act by mediating protein-protein interactions during germ cell maturation. This is Ankyrin repeat, SAM and basic leucine zipper domain-containing protein 1 (ASZ1) from Neofelis nebulosa (Clouded leopard).